Reading from the N-terminus, the 166-residue chain is Ribosome-binding factor A (166 aa).

A disordered region spans residues 122-166; the sequence is LASTAEHAGDADPYRVDTEDDDDDTDGADAEARSDADVRRGPQSG. Positions 128–138 are enriched in basic and acidic residues; sequence HAGDADPYRVD. The span at 139-150 shows a compositional bias: acidic residues; it reads TEDDDDDTDGAD. Over residues 151–166 the composition is skewed to basic and acidic residues; that stretch reads AEARSDADVRRGPQSG.

It belongs to the RbfA family. As to quaternary structure, monomer. Binds 30S ribosomal subunits, but not 50S ribosomal subunits or 70S ribosomes.

It is found in the cytoplasm. One of several proteins that assist in the late maturation steps of the functional core of the 30S ribosomal subunit. Associates with free 30S ribosomal subunits (but not with 30S subunits that are part of 70S ribosomes or polysomes). Required for efficient processing of 16S rRNA. May interact with the 5'-terminal helix region of 16S rRNA. In Saccharopolyspora erythraea (strain ATCC 11635 / DSM 40517 / JCM 4748 / NBRC 13426 / NCIMB 8594 / NRRL 2338), this protein is Ribosome-binding factor A.